The sequence spans 625 residues: Endoglucanase D (625 aa).

The signal sequence occupies residues 1–17 (SLTGVFPSGLIETKVSA). The Nucleophile role is filled by D177. Residues H492 and D522 contribute to the active site. E531 serves as the catalytic Proton donor. One can recognise a Dockerin domain in the interval 555-625 (NEVLYGDVND…LIRVIEKLPI (71 aa)).

The protein belongs to the glycosyl hydrolase 9 (cellulase E) family. It depends on Ca(2+) as a cofactor.

The enzyme catalyses Endohydrolysis of (1-&gt;4)-beta-D-glucosidic linkages in cellulose, lichenin and cereal beta-D-glucans.. In terms of biological role, this enzyme catalyzes the endohydrolysis of 1,4-beta-glucosidic linkages in cellulose, lichenin and cereal beta-D-glucans. This Acetivibrio thermocellus (Hungateiclostridium thermocellum) protein is Endoglucanase D (celD).